A 426-amino-acid polypeptide reads, in one-letter code: Serine--tRNA ligase (426 aa).

Residues 1–15 (MIDVKDLSENPDKFR) show a composition bias toward basic and acidic residues. A disordered region spans residues 1–20 (MIDVKDLSENPDKFRASQRA). 228–230 (TSE) provides a ligand contact to L-serine. ATP is bound by residues 259–261 (RRE) and V275. E282 is a binding site for L-serine. 346-349 (ELTS) lines the ATP pocket. T386 contacts L-serine.

It belongs to the class-II aminoacyl-tRNA synthetase family. Type-1 seryl-tRNA synthetase subfamily. Homodimer. The tRNA molecule binds across the dimer.

It localises to the cytoplasm. The catalysed reaction is tRNA(Ser) + L-serine + ATP = L-seryl-tRNA(Ser) + AMP + diphosphate + H(+). It catalyses the reaction tRNA(Sec) + L-serine + ATP = L-seryl-tRNA(Sec) + AMP + diphosphate + H(+). The protein operates within aminoacyl-tRNA biosynthesis; selenocysteinyl-tRNA(Sec) biosynthesis; L-seryl-tRNA(Sec) from L-serine and tRNA(Sec): step 1/1. In terms of biological role, catalyzes the attachment of serine to tRNA(Ser). Is also able to aminoacylate tRNA(Sec) with serine, to form the misacylated tRNA L-seryl-tRNA(Sec), which will be further converted into selenocysteinyl-tRNA(Sec). In Paenarthrobacter aurescens (strain TC1), this protein is Serine--tRNA ligase.